The sequence spans 185 residues: MKAVSIEAGEGSKAKRVHGVNRGISVFDLVLRIVALVGTLASAVAMGTADQALSFSTQIVNFEAQYDDIDAFKFFVVSNSITCVYLALSIPISIFHIIRSRAGKSRVLLIVLDAIMLVFLTSGASAAAAIVYLAHNGNTSTNWFSICQQYTDFCQRSAGSLIGSFGAMALMVLLIILSSIALSRR.

Residues 1–25 (MKAVSIEAGEGSKAKRVHGVNRGIS) are Cytoplasmic-facing. Residues 26-46 (VFDLVLRIVALVGTLASAVAM) form a helical membrane-spanning segment. The Extracellular portion of the chain corresponds to 47-73 (GTADQALSFSTQIVNFEAQYDDIDAFK). A helical transmembrane segment spans residues 74–94 (FFVVSNSITCVYLALSIPISI). Over 95-106 (FHIIRSRAGKSR) the chain is Cytoplasmic. The chain crosses the membrane as a helical span at residues 107–127 (VLLIVLDAIMLVFLTSGASAA). At 128-160 (AAIVYLAHNGNTSTNWFSICQQYTDFCQRSAGS) the chain is on the extracellular side. N138 carries N-linked (GlcNAc...) asparagine glycosylation. A helical membrane pass occupies residues 161 to 181 (LIGSFGAMALMVLLIILSSIA). Over 182–185 (LSRR) the chain is Cytoplasmic.

It belongs to the Casparian strip membrane proteins (CASP) family. In terms of assembly, homodimer and heterodimers.

The protein resides in the cell membrane. Its function is as follows. Regulates membrane-cell wall junctions and localized cell wall deposition. Required for establishment of the Casparian strip membrane domain (CSD) and the subsequent formation of Casparian strips, a cell wall modification of the root endodermis that determines an apoplastic barrier between the intraorganismal apoplasm and the extraorganismal apoplasm and prevents lateral diffusion. The protein is Casparian strip membrane protein 2 of Solanum demissum (Wild potato).